A 143-amino-acid chain; its full sequence is Mediator of RNA polymerase II transcription subunit 22 (143 aa).

The protein belongs to the Mediator complex subunit 22 family. In terms of assembly, component of the Mediator complex, which includes at least CDK8, MED4, MED6, MED11, MED14, MED17, MED18, MED20, MED21, MED22, MED27, MED28, MED30 and MED31.

It is found in the nucleus. Functionally, component of the Mediator complex, a coactivator involved in the regulated transcription of nearly all RNA polymerase II-dependent genes. Mediator functions as a bridge to convey information from gene-specific regulatory proteins to the basal RNA polymerase II transcription machinery. Mediator is recruited to promoters by direct interactions with regulatory proteins and serves as a scaffold for the assembly of a functional preinitiation complex with RNA polymerase II and the general transcription factors. This Drosophila melanogaster (Fruit fly) protein is Mediator of RNA polymerase II transcription subunit 22 (MED22).